The chain runs to 308 residues: Neurexophilin-4 (308 aa).

Positions 1-23 are cleaved as a signal peptide; sequence MRLLPEWFLLLFGPWLLRKAVSA. Residues 24–84 form an II region; it reads QIPESGRPQY…GALARAGAAG (61 aa). Positions 40–51 are enriched in low complexity; sequence AAGAGAPGQQLP. The segment at 40 to 59 is disordered; it reads AAGAGAPGQQLPEPRSSDGL. Residues N72, N133, N143, and N149 are each glycosylated (N-linked (GlcNAc...) asparagine). Residues 85-163 form an III region; it reads ALPAQRTKRK…IVPPSKRVEF (79 aa). Residues 164–224 form an IV (linker domain) region; the sequence is GGVWLPGPVP…PLGGALGVPG (61 aa). The v (Cys-rich) stretch occupies residues 225–308; it reads AKESRAFNCH…NFQSEHPYFG (84 aa).

Belongs to the neurexophilin family. May be proteolytically processed at the boundary between the N-terminal non-conserved and the central conserved domain in neuron-like cells. Expressed in brain, spleen, and testis.

Its subcellular location is the secreted. Its function is as follows. May be signaling molecules that resemble neuropeptides and that act by binding to alpha-neurexins and possibly other receptors. The sequence is that of Neurexophilin-4 (NXPH4) from Homo sapiens (Human).